The chain runs to 343 residues: Photosystem II protein D1 (343 aa).

3 consecutive transmembrane segments (helical) span residues 28 to 45 (YIGWFGVLLFPLIAVSTV), 117 to 132 (HFLAAVLAWLGREYEY), and 141 to 155 (WIYLAFSAPVVAASA). A chlorophyll a-binding site is contributed by His117. Pheophytin a is bound at residue Trp125. [CaMn4O5] cluster is bound by residues Asp169 and Glu188. The chain crosses the membrane as a helical span at residues 196-217 (FHILGVSAVFGGSLFSAMHGSL). Residue His197 participates in chlorophyll a binding. A quinone is bound by residues His214 and 263-264 (SF). His214 contacts Fe cation. His271 serves as a coordination point for Fe cation. A helical membrane pass occupies residues 273 to 287 (FLAAWPVIGIWCTAI). [CaMn4O5] cluster contacts are provided by His331, Glu332, Asp341, and Ala343.

It belongs to the reaction center PufL/M/PsbA/D family. In terms of assembly, PSII is composed of 1 copy each of membrane proteins PsbA, PsbB, PsbC, PsbD, PsbE, PsbF, PsbH, PsbI, PsbJ, PsbK, PsbL, PsbM, PsbT, PsbX, PsbY, PsbZ, Psb30/Ycf12, at least 3 peripheral proteins of the oxygen-evolving complex and a large number of cofactors. It forms dimeric complexes. Requires The D1/D2 heterodimer binds P680, chlorophylls that are the primary electron donor of PSII, and subsequent electron acceptors. It shares a non-heme iron and each subunit binds pheophytin, quinone, additional chlorophylls, carotenoids and lipids. D1 provides most of the ligands for the Mn4-Ca-O5 cluster of the oxygen-evolving complex (OEC). There is also a Cl(-1) ion associated with D1 and D2, which is required for oxygen evolution. The PSII complex binds additional chlorophylls, carotenoids and specific lipids. as cofactor. Post-translationally, tyr-160 forms a radical intermediate that is referred to as redox-active TyrZ, YZ or Y-Z.

The protein resides in the plastid. It is found in the chloroplast thylakoid membrane. It carries out the reaction 2 a plastoquinone + 4 hnu + 2 H2O = 2 a plastoquinol + O2. Its function is as follows. Photosystem II (PSII) is a light-driven water:plastoquinone oxidoreductase that uses light energy to abstract electrons from H(2)O, generating O(2) and a proton gradient subsequently used for ATP formation. It consists of a core antenna complex that captures photons, and an electron transfer chain that converts photonic excitation into a charge separation. The D1/D2 (PsbA/PsbD) reaction center heterodimer binds P680, the primary electron donor of PSII as well as several subsequent electron acceptors. The polypeptide is Photosystem II protein D1 (Prorocentrum micans (Red tide dinoflagellate)).